A 587-amino-acid polypeptide reads, in one-letter code: Ankyrin repeat and SOCS box protein 14 (587 aa).

ANK repeat units lie at residues 82–112, 117–146, 150–179, 183–212, 216–245, 248–277, 281–310, 313–342, 355–384, 385–414, and 416–449; these read IGWI…SLWE, NGET…NPNA, EGNS…DVNL, NERT…HPDP, YGFT…IFCL, DSSS…DANI, SGHL…LAAI, SGIS…DVNF, HRKS…LPNQ, DPVN…NVNY, and CRVN…DTER. An SOCS box domain is found at 521-576; that stretch reads WSEIHFILTNPRSLKHLCRLKIRKCMGRLHLRCPVFMSFLPLPNRLKAYVLYKEYD.

This sequence belongs to the ankyrin SOCS box (ASB) family. In terms of assembly, interacts with MAPRE2; this interaction promotes MAPRE2 degradation.

It functions in the pathway protein modification; protein ubiquitination. May be a substrate-recognition component of a SCF-like ECS (Elongin-Cullin-SOCS-box protein) E3 ubiquitin-protein ligase complex which mediates the ubiquitination and subsequent proteasomal degradation of target proteins. Plays a role in the inhibition of cardiomyocyte nuclear proliferation by mediating the ubiquitination and degradation of MAPRE2. This Homo sapiens (Human) protein is Ankyrin repeat and SOCS box protein 14 (ASB14).